The following is a 370-amino-acid chain: Gibberellin 2-beta-dioxygenase 2 (370 aa).

The region spanning D186 to P306 is the Fe2OG dioxygenase domain. Y196 provides a ligand contact to 2-oxoglutarate. The Fe cation site is built by H224, D226, and H287. 2-oxoglutarate contacts are provided by R297 and S299.

It belongs to the iron/ascorbate-dependent oxidoreductase family. GA2OX subfamily. Fe(2+) is required as a cofactor.

It catalyses the reaction gibberellin A1 + 2-oxoglutarate + O2 = gibberellin A8 + succinate + CO2. Its function is as follows. Catalyzes the 2-beta-hydroxylation of several biologically active gibberellins, leading to the homeostatic regulation of their endogenous level. Catabolism of gibberellins (GAs) plays a central role in plant development. The protein is Gibberellin 2-beta-dioxygenase 2 of Oryza sativa subsp. japonica (Rice).